A 1587-amino-acid polypeptide reads, in one-letter code: DNA topoisomerase 2 (1587 aa).

Positions 1-15 (MSDADPFDMSDDDDN) are enriched in acidic residues. A disordered region spans residues 1-47 (MSDADPFDMSDDDDNSVLSHTPPKKQKKAPTTKKGGSKPLADVENES). Positions 22–31 (PPKKQKKAPT) are enriched in basic residues. ATP contacts are provided by residues N126, N155, 183-185 (SSN), and 196-203 (GRNGFGAK). Interaction with DNA stretches follow at residues 381 to 383 (KKK) and 381 to 386 (KKKNKN). 415–417 (QTK) serves as a coordination point for ATP. The segment at 461-485 (MLKKTDGGRRSRMNNPKLTDANKAG) is disordered. A Toprim domain is found at 492–606 (CTLILTEGDS…SLLKIPEFLI (115 aa)). Residues E498, D575, and D577 each coordinate Mg(2+). Residues 743–1190 (IPSVVDGLKP…SKEDIWKRDL (448 aa)) enclose the Topo IIA-type catalytic domain. The active-site O-(5'-phospho-DNA)-tyrosine intermediate is Y833. Residues 1016–1025 (KLSKTMTTTN) are interaction with DNA. Positions 1204–1587 (EARRQRKVAN…PRPRRPRRRS (384 aa)) are disordered. A compositionally biased stretch (low complexity) spans 1271 to 1280 (LSFLGKSSAK). Over residues 1308-1320 (PKSEPKADPKPKD) the composition is skewed to basic and acidic residues. The segment covering 1321–1334 (EDEDIVMEDSDIEE) has biased composition (acidic residues). Basic and acidic residues predominate over residues 1348–1364 (VKPESEDGQAKIAEAPK). A compositionally biased stretch (basic residues) spans 1365-1375 (RGRAAAKPKPK). 2 stretches are compositionally biased toward acidic residues: residues 1379 to 1391 (EDEE…DDFM) and 1419 to 1430 (SDSDSDNGDDLL). Polar residues-rich tracts occupy residues 1441–1451 (GSTNGASTSDS) and 1466–1475 (GLKTTASKAS). The segment covering 1512 to 1521 (DNEPEDDDDE) has biased composition (acidic residues). Low complexity predominate over residues 1524-1542 (KPAAKGKAAAKGKSTAAAA). Residues 1558–1568 (PKPPPRLPCPL) show a composition bias toward pro residues. The segment covering 1571–1587 (RRTHRSNPRPRRPRRRS) has biased composition (basic residues).

This sequence belongs to the type II topoisomerase family. In terms of assembly, homodimer. It depends on Mg(2+) as a cofactor. Mn(2+) serves as cofactor. The cofactor is Ca(2+).

It localises to the nucleus. The enzyme catalyses ATP-dependent breakage, passage and rejoining of double-stranded DNA.. Control of topological states of DNA by transient breakage and subsequent rejoining of DNA strands. Topoisomerase II makes double-strand breaks. This chain is DNA topoisomerase 2 (TOP2), found in Penicillium chrysogenum (Penicillium notatum).